The sequence spans 852 residues: G-type lectin S-receptor-like serine/threonine-protein kinase At4g03230 (852 aa).

The N-terminal stretch at 1-19 (MILSVFFYMFLLHIRRLDC) is a signal peptide. One can recognise a Bulb-type lectin domain in the interval 20-154 (FVAVQDSKTL…GNEANVVWQS (135 aa)). Over 20 to 444 (FVAVQDSKTL…RGRGRYGEAK (425 aa)) the chain is Extracellular. N-linked (GlcNAc...) asparagine glycosylation is found at Asn-37, Asn-59, Asn-171, Asn-187, Asn-234, and Asn-243. The EGF-like domain occupies 285 to 321 (PRDECSVYNACGNFGSCNSKNEEMCKCLPGFRPNFLE). Cystine bridges form between Cys-289–Cys-301 and Cys-295–Cys-309. The 88-residue stretch at 339–426 (CGKDGVVVGD…SRNVFIRVAV (88 aa)) folds into the PAN domain. An N-linked (GlcNAc...) asparagine glycan is attached at Asn-352. 2 disulfide bridges follow: Cys-373-Cys-400 and Cys-377-Cys-383. Residues 445-465 (TPVVLIIVVTFTSAAILVVLS) form a helical membrane-spanning segment. At 466–852 (STASYVFLQR…ELTITLEDGR (387 aa)) the chain is on the cytoplasmic side. In terms of domain architecture, Protein kinase spans 532 to 819 (FSNANKLGQG…TLPTPKQPAF (288 aa)). ATP contacts are provided by residues 538–546 (LGQGGFGPV) and Lys-560. The residue at position 566 (Ser-566) is a Phosphoserine. The interval 621 to 638 (KLCQRLDWKMRCNIILGI) is caM-binding. Residue Asp-657 is the Proton acceptor of the active site. 2 positions are modified to phosphoserine: Ser-661 and Ser-674. Thr-691 carries the phosphothreonine modification. Residues 826–852 (SSSKASSSTKPETCSENELTITLEDGR) are disordered. 2 positions are modified to phosphoserine: Ser-831 and Ser-840. A compositionally biased stretch (polar residues) spans 834–845 (TKPETCSENELT). Position 847 is a phosphothreonine (Thr-847).

Belongs to the protein kinase superfamily. Ser/Thr protein kinase family.

The protein resides in the cell membrane. The catalysed reaction is L-seryl-[protein] + ATP = O-phospho-L-seryl-[protein] + ADP + H(+). It carries out the reaction L-threonyl-[protein] + ATP = O-phospho-L-threonyl-[protein] + ADP + H(+). The polypeptide is G-type lectin S-receptor-like serine/threonine-protein kinase At4g03230 (Arabidopsis thaliana (Mouse-ear cress)).